Consider the following 195-residue polypeptide: ATP-dependent Clp protease proteolytic subunit (195 aa).

Ser99 (nucleophile) is an active-site residue. His124 is an active-site residue.

It belongs to the peptidase S14 family. As to quaternary structure, fourteen ClpP subunits assemble into 2 heptameric rings which stack back to back to give a disk-like structure with a central cavity, resembling the structure of eukaryotic proteasomes.

Its subcellular location is the cytoplasm. It carries out the reaction Hydrolysis of proteins to small peptides in the presence of ATP and magnesium. alpha-casein is the usual test substrate. In the absence of ATP, only oligopeptides shorter than five residues are hydrolyzed (such as succinyl-Leu-Tyr-|-NHMec, and Leu-Tyr-Leu-|-Tyr-Trp, in which cleavage of the -Tyr-|-Leu- and -Tyr-|-Trp bonds also occurs).. Cleaves peptides in various proteins in a process that requires ATP hydrolysis. Has a chymotrypsin-like activity. Plays a major role in the degradation of misfolded proteins. In Coxiella burnetii (strain RSA 331 / Henzerling II), this protein is ATP-dependent Clp protease proteolytic subunit.